The chain runs to 172 residues: Ribosome maturation factor RimM (172 aa).

Residues 96–168 (EGEFYYHQII…RVDVELMEGL (73 aa)) form the PRC barrel domain.

Belongs to the RimM family. Binds ribosomal protein uS19.

Its subcellular location is the cytoplasm. In terms of biological role, an accessory protein needed during the final step in the assembly of 30S ribosomal subunit, possibly for assembly of the head region. Essential for efficient processing of 16S rRNA. May be needed both before and after RbfA during the maturation of 16S rRNA. It has affinity for free ribosomal 30S subunits but not for 70S ribosomes. The polypeptide is Ribosome maturation factor RimM (Streptococcus pyogenes serotype M3 (strain ATCC BAA-595 / MGAS315)).